A 179-amino-acid polypeptide reads, in one-letter code: Large ribosomal subunit protein bL17 (179 aa).

Basic and acidic residues predominate over residues 123–161 (KEKDTKKKDDSKKSDDKKTSKKEAGFKSSKGESEHKKNT). Positions 123–179 (KEKDTKKKDDSKKSDDKKTSKKEAGFKSSKGESEHKKNTDQVVDSSSNRRYNRVKGS) are disordered. Positions 162–171 (DQVVDSSSNR) are enriched in polar residues.

This sequence belongs to the bacterial ribosomal protein bL17 family. As to quaternary structure, part of the 50S ribosomal subunit. Contacts protein L32.

This Treponema denticola (strain ATCC 35405 / DSM 14222 / CIP 103919 / JCM 8153 / KCTC 15104) protein is Large ribosomal subunit protein bL17.